We begin with the raw amino-acid sequence, 59 residues long: Lantipeptide Flvbeta.f (59 aa).

Residues methionine 1–alanine 27 constitute a propeptide, cleaved by FlvT. 2,3-didehydrobutyrine; by FlvM2 is present on residues threonine 31 and threonine 32. Cross-links (beta-methyllanthionine (Thr-Cys); by FlvM2) lie at residues threonine 41 to cysteine 47 and threonine 53 to cysteine 56.

In terms of processing, contains DL-beta-methyllanthionine, when coepressed in E.coli with the flavecin synthetase FlvM2.

It is found in the secreted. In terms of biological role, lanthionine-containing peptide that does probably not show antibacterial activity, since its analog [+7]Flvbeta.f does not show antibacterial activity against M.luteus. Also does not show antibiotic activity when tested with [Del2]Flvalpha.a, an analog of Flvalpha.a, which is encoded by the same operon than Flvbeta.f. The bactericidal activity of lantibiotics is based on depolarization of energized bacterial cytoplasmic membranes, initiated by the formation of aqueous transmembrane pores. In Ruminococcus flavefaciens, this protein is Lantipeptide Flvbeta.f.